We begin with the raw amino-acid sequence, 230 residues long: Large ribosomal subunit protein uL1 (230 aa).

This sequence belongs to the universal ribosomal protein uL1 family. In terms of assembly, part of the 50S ribosomal subunit.

Its function is as follows. Binds directly to 23S rRNA. The L1 stalk is quite mobile in the ribosome, and is involved in E site tRNA release. In terms of biological role, protein L1 is also a translational repressor protein, it controls the translation of the L11 operon by binding to its mRNA. The protein is Large ribosomal subunit protein uL1 of Bacillus cereus (strain G9842).